A 394-amino-acid chain; its full sequence is Phosphopentomutase (394 aa).

Residues D14, D287, H292, D328, H329, and H340 each coordinate Mn(2+).

It belongs to the phosphopentomutase family. The cofactor is Mn(2+).

The protein resides in the cytoplasm. The enzyme catalyses 2-deoxy-alpha-D-ribose 1-phosphate = 2-deoxy-D-ribose 5-phosphate. The catalysed reaction is alpha-D-ribose 1-phosphate = D-ribose 5-phosphate. It functions in the pathway carbohydrate degradation; 2-deoxy-D-ribose 1-phosphate degradation; D-glyceraldehyde 3-phosphate and acetaldehyde from 2-deoxy-alpha-D-ribose 1-phosphate: step 1/2. Its function is as follows. Isomerase that catalyzes the conversion of deoxy-ribose 1-phosphate (dRib-1-P) and ribose 1-phosphate (Rib-1-P) to deoxy-ribose 5-phosphate (dRib-5-P) and ribose 5-phosphate (Rib-5-P), respectively. The protein is Phosphopentomutase of Listeria welshimeri serovar 6b (strain ATCC 35897 / DSM 20650 / CCUG 15529 / CIP 8149 / NCTC 11857 / SLCC 5334 / V8).